A 646-amino-acid polypeptide reads, in one-letter code: MSSQKKKISLFAFFLLTVITITLKTYFSYYVDFSLGVKGLVQNLILLMNPYSLVALVLSVFLFFKGKKAFWFMFIGGFLLTFLLYANVVYFRFFSDFLTFSTLNQVGNVESMGGAVSASFKWYDFVYFIDTLVYLFILIFKTKWLDTKAFSKKFVPVVMAASVALFFLNLAFAETDRPELLTRTFDHKYLVKYLGPYNFTVYDGVKTIENNQQKALASEDDLTKVLNYTKQRQTEPNPEYYGVAKKKNIIKIHLESFQTFLINKKVNGKEVTPFLNKLSSGKEQFTYFPNFFHQTGQGKTSDSEFTMDNSLYGLPQGSAFSLKGDNTYQSLPAILDQKQGYKSDVMHGDYKTFWNRDQVYKHFGIDKFYDATYYDMSDKNVVNLGLKDKIFFKDSANYQAKMKSPFYSHLITLTNHYPFTLDEKDATIEKSNTGDATVDGYIQTARYLDEALEEYINDLKKKGLYDNSVIMIYGDHYGISENHNNAMEKLLGEKITPAKFTDLNRTGFWIKIPGKSGGINNEYAGQVDVMPTILHLAGIDTKNYLMFGTDLFSKGHNQVVPFRNGDFITKDYKYVNGKIYSNKNNELITTQPADFEKNKKQVEKDLEMSDNVLNGDLFRFYKNPDFKKVNPSKYKYETGPKANSKK.

Residues 1–7 (MSSQKKK) lie on the Cytoplasmic side of the membrane. The chain crosses the membrane as a helical span at residues 8–28 (ISLFAFFLLTVITITLKTYFS). At 29–43 (YYVDFSLGVKGLVQN) the chain is on the extracellular side. The chain crosses the membrane as a helical span at residues 44–64 (LILLMNPYSLVALVLSVFLFF). The Cytoplasmic portion of the chain corresponds to 65–68 (KGKK). The helical transmembrane segment at 69–89 (AFWFMFIGGFLLTFLLYANVV) threads the bilayer. The Extracellular portion of the chain corresponds to 90–119 (YFRFFSDFLTFSTLNQVGNVESMGGAVSAS). A helical membrane pass occupies residues 120–140 (FKWYDFVYFIDTLVYLFILIF). Over 141–153 (KTKWLDTKAFSKK) the chain is Cytoplasmic. The helical transmembrane segment at 154-174 (FVPVVMAASVALFFLNLAFAE) threads the bilayer. Over 175 to 646 (TDRPELLTRT…ETGPKANSKK (472 aa)) the chain is Extracellular. Residues Glu-255 and Thr-300 each coordinate Mn(2+). The active site involves Thr-300. His-416 provides a ligand contact to substrate. Positions 475 and 476 each coordinate Mn(2+). Positions 623–638 (NPDFKKVNPSKYKYET) are enriched in basic and acidic residues. The disordered stretch occupies residues 623–646 (NPDFKKVNPSKYKYETGPKANSKK).

The protein belongs to the LTA synthase family. In terms of processing, proteolytically cleaved.

It localises to the cell membrane. The protein resides in the secreted. It participates in cell wall biogenesis; lipoteichoic acid biosynthesis. Its function is as follows. Catalyzes the polymerization of lipoteichoic acid (LTA) polyglycerol phosphate, a reaction that presumably uses phosphatidylglycerol (PG) as substrate. Is required for staphylococcal growth and cell division process. This Staphylococcus aureus (strain USA300) protein is Lipoteichoic acid synthase (ltaS).